The sequence spans 245 residues: E3 ubiquitin-protein ligase RNF138 (245 aa).

Residue Ala-2 is modified to N-acetylalanine. Residues 18-58 (CPVCQEVLKTPVRTAACQHVFCRKCFLTAMRESGIHCPLCR) form an RING-type zinc finger. Zn(2+) is bound by residues Cys-86, Cys-89, His-101, and Cys-105. The C2HC RNF-type zinc-finger motif lies at 86-105 (CRCCAKQIKFYRMRHHYKSC). A disordered region spans residues 128 to 153 (VGNSNRSETSASDNIETYQENTGSSG). 2 C2H2-type zinc fingers span residues 157-180 (FKCP…NSNH) and 187-215 (VTCP…NQRH). The 19-residue stretch at 225 to 243 (LQLDEETQYQTAVEESFQV) folds into the UIM domain.

Interacts with NLK. Interacts with XRCC5/Ku80. Interacts with RBBP8/CtIP. In terms of processing, auto-ubiquitinated.

The protein localises to the chromosome. The enzyme catalyses S-ubiquitinyl-[E2 ubiquitin-conjugating enzyme]-L-cysteine + [acceptor protein]-L-lysine = [E2 ubiquitin-conjugating enzyme]-L-cysteine + N(6)-ubiquitinyl-[acceptor protein]-L-lysine.. The protein operates within protein modification; protein ubiquitination. Functionally, E3 ubiquitin-protein ligase involved in DNA damage response by promoting DNA resection and homologous recombination. Recruited to sites of double-strand breaks following DNA damage and specifically promotes double-strand break repair via homologous recombination. Two different, non-exclusive, mechanisms have been proposed. According to a report, regulates the choice of double-strand break repair by favoring homologous recombination over non-homologous end joining (NHEJ): acts by mediating ubiquitination of XRCC5/Ku80, leading to remove the Ku complex from DNA breaks, thereby promoting homologous recombination. According to another report, cooperates with UBE2Ds E2 ubiquitin ligases (UBE2D1, UBE2D2, UBE2D3 or UBE2D4) to promote homologous recombination by mediating ubiquitination of RBBP8/CtIP. Together with NLK, involved in the ubiquitination and degradation of TCF/LEF. Also exhibits auto-ubiquitination activity in combination with UBE2K. May act as a negative regulator in the Wnt/beta-catenin-mediated signaling pathway. This chain is E3 ubiquitin-protein ligase RNF138 (RNF138), found in Bos taurus (Bovine).